The sequence spans 271 residues: Formamidopyrimidine-DNA glycosylase (271 aa).

Pro-2 serves as the catalytic Schiff-base intermediate with DNA. Residue Glu-3 is the Proton donor of the active site. The active-site Proton donor; for beta-elimination activity is Lys-58. 3 residues coordinate DNA: His-92, Arg-111, and Lys-152. An FPG-type zinc finger spans residues 237-271 (YVYGKVQKPCKICNNTITLIRQNGRSTYFCNACQN). The active-site Proton donor; for delta-elimination activity is the Arg-261.

Belongs to the FPG family. In terms of assembly, monomer. It depends on Zn(2+) as a cofactor.

It carries out the reaction Hydrolysis of DNA containing ring-opened 7-methylguanine residues, releasing 2,6-diamino-4-hydroxy-5-(N-methyl)formamidopyrimidine.. The catalysed reaction is 2'-deoxyribonucleotide-(2'-deoxyribose 5'-phosphate)-2'-deoxyribonucleotide-DNA = a 3'-end 2'-deoxyribonucleotide-(2,3-dehydro-2,3-deoxyribose 5'-phosphate)-DNA + a 5'-end 5'-phospho-2'-deoxyribonucleoside-DNA + H(+). In terms of biological role, involved in base excision repair of DNA damaged by oxidation or by mutagenic agents. Acts as a DNA glycosylase that recognizes and removes damaged bases. Has a preference for oxidized purines, such as 7,8-dihydro-8-oxoguanine (8-oxoG). Has AP (apurinic/apyrimidinic) lyase activity and introduces nicks in the DNA strand. Cleaves the DNA backbone by beta-delta elimination to generate a single-strand break at the site of the removed base with both 3'- and 5'-phosphates. This Wolbachia sp. subsp. Brugia malayi (strain TRS) protein is Formamidopyrimidine-DNA glycosylase.